Here is a 161-residue protein sequence, read N- to C-terminus: Ecotin (161 aa).

The N-terminal stretch at 1-23 (MGNFTVRATAGLMLASLSTLAHA) is a signal peptide. An intrachain disulfide couples Cys69 to Cys106.

Belongs to the protease inhibitor I11 (ecotin) family. Homodimer.

The protein resides in the periplasm. Functionally, general inhibitor of family S1 serine proteases. This Pseudomonas fluorescens (strain Pf0-1) protein is Ecotin.